A 366-amino-acid chain; its full sequence is 2-aminoethylphosphonate--pyruvate transaminase (366 aa).

Lys-192 carries the N6-(pyridoxal phosphate)lysine modification.

It belongs to the class-V pyridoxal-phosphate-dependent aminotransferase family. PhnW subfamily. As to quaternary structure, homodimer. Pyridoxal 5'-phosphate serves as cofactor.

It catalyses the reaction (2-aminoethyl)phosphonate + pyruvate = phosphonoacetaldehyde + L-alanine. Its function is as follows. Involved in phosphonate degradation. The protein is 2-aminoethylphosphonate--pyruvate transaminase (phnW) of Lysinibacillus sphaericus (strain C3-41).